Here is a 376-residue protein sequence, read N- to C-terminus: Lipoyl synthase, mitochondrial (376 aa).

Residues C102, C107, C113, C133, C137, C140, and S348 each contribute to the [4Fe-4S] cluster site. In terms of domain architecture, Radical SAM core spans 116 to 337 (GGEDKTATAT…EEVGGEMGFA (222 aa)).

It belongs to the radical SAM superfamily. Lipoyl synthase family. [4Fe-4S] cluster is required as a cofactor.

It is found in the mitochondrion. It carries out the reaction [[Fe-S] cluster scaffold protein carrying a second [4Fe-4S](2+) cluster] + N(6)-octanoyl-L-lysyl-[protein] + 2 oxidized [2Fe-2S]-[ferredoxin] + 2 S-adenosyl-L-methionine + 4 H(+) = [[Fe-S] cluster scaffold protein] + N(6)-[(R)-dihydrolipoyl]-L-lysyl-[protein] + 4 Fe(3+) + 2 hydrogen sulfide + 2 5'-deoxyadenosine + 2 L-methionine + 2 reduced [2Fe-2S]-[ferredoxin]. The protein operates within protein modification; protein lipoylation via endogenous pathway; protein N(6)-(lipoyl)lysine from octanoyl-[acyl-carrier-protein]: step 2/2. In terms of biological role, catalyzes the radical-mediated insertion of two sulfur atoms into the C-6 and C-8 positions of the octanoyl moiety bound to the lipoyl domains of lipoate-dependent enzymes, thereby converting the octanoylated domains into lipoylated derivatives. In Branchiostoma floridae (Florida lancelet), this protein is Lipoyl synthase, mitochondrial.